A 442-amino-acid chain; its full sequence is Glutamate synthase large subunit-like protein (442 aa).

The interval 108–133 is disordered; the sequence is LGRGATASGTSTTTGDGGMTDEERGH. The span at 109-121 shows a compositional bias: low complexity; it reads GRGATASGTSTTT.

The protein belongs to the glutamate synthase family.

The chain is Glutamate synthase large subunit-like protein (glxD) from Rhizobium meliloti (strain 1021) (Ensifer meliloti).